The primary structure comprises 386 residues: Phosphatidyl-myo-inositol mannosyltransferase (386 aa).

Positions 9 and 16 each coordinate GDP-alpha-D-mannose. Residues Gln-18, 62–63, and Arg-68 each bind a 1,2-diacyl-sn-glycero-3-phospho-(1D-myo-inositol); that span reads YN. GDP-alpha-D-mannose is bound by residues Arg-196, 201 to 202, 251 to 253, Lys-256, 274 to 278, and Glu-282; these read RK, VDD, and ESFGI.

This sequence belongs to the glycosyltransferase group 1 family. Glycosyltransferase 4 subfamily. Monomer. Requires Mg(2+) as cofactor.

The protein resides in the cell membrane. It catalyses the reaction a 1,2-diacyl-sn-glycero-3-phospho-(1D-myo-inositol) + GDP-alpha-D-mannose = a 1,2-diacyl-sn-glycero-3-phospho-[alpha-D-mannopyranosyl-(1&lt;-&gt;6)-D-myo-inositol] + GDP + H(+). It participates in phospholipid metabolism; phosphatidylinositol metabolism. Involved in the biosynthesis of phosphatidyl-myo-inositol mannosides (PIM) which are early precursors in the biosynthesis of lipomannans (LM) and lipoarabinomannans (LAM). Catalyzes the addition of a mannosyl residue from GDP-D-mannose (GDP-Man) to the position 2 of the carrier lipid phosphatidyl-myo-inositol (PI) to generate a phosphatidyl-myo-inositol bearing an alpha-1,2-linked mannose residue (PIM1). In contrary to PimB, the mannosyltransferase PimA is unable to transfer a mannose residue to the position 6 of the phosphatidyl-myo-inositol of PIM1. This is Phosphatidyl-myo-inositol mannosyltransferase from Mycolicibacterium smegmatis (strain ATCC 700084 / mc(2)155) (Mycobacterium smegmatis).